The chain runs to 179 residues: Inosine/xanthosine triphosphatase (179 aa).

Substrate is bound by residues 8 to 13 and 68 to 69; these read TTNPAK and EA. A Mg(2+)-binding site is contributed by Glu-68.

Belongs to the YjjX NTPase family. As to quaternary structure, homodimer. Requires Mg(2+) as cofactor. Mn(2+) serves as cofactor.

The enzyme catalyses XTP + H2O = XDP + phosphate + H(+). It catalyses the reaction ITP + H2O = IDP + phosphate + H(+). In terms of biological role, phosphatase that hydrolyzes non-canonical purine nucleotides such as XTP and ITP to their respective diphosphate derivatives. Probably excludes non-canonical purines from DNA/RNA precursor pool, thus preventing their incorporation into DNA/RNA and avoiding chromosomal lesions. The protein is Inosine/xanthosine triphosphatase of Serratia proteamaculans (strain 568).